Reading from the N-terminus, the 43-residue chain is Lanthionine-containing peptide SapB (43 aa).

Positions M1–R21 are cleaved as a signal peptide. 2 cross-links (lanthionine (Ser-Cys)) span residues S24 to C31 and S34 to C41. 2 positions are modified to 2,3-didehydroalanine (Ser): S27 and S37.

It belongs to the lanthionine-containing morphogen protein family. In terms of processing, maturation involves the enzymatic conversion of Ser into dehydrated AA and the formation of thioether bonds with cysteine. This is followed by membrane translocation and cleavage of the modified precursor.

Its function is as follows. Lanthionine-containing peptide devoid of antibiotic properties, involved in the formation of aerial mycelium. Suggested to self-assemble at air-water interfaces, thus providing a film of surfactant through which nascent aerial hyphae can emerge. The aerial hyphae differentiate further into spores. This chain is Lanthionine-containing peptide SapB (ramS), found in Streptomyces griseus.